Consider the following 704-residue polypeptide: Protein cueball (704 aa).

Residues 1-26 form the signal peptide; that stretch reads MKSPCRAAAGWLVLLLSSCCLGYVIA. At 27–594 the chain is on the extracellular side; that stretch reads TEWAAAVTTD…TYCKESFNRT (568 aa). LDL-receptor class B repeat units lie at residues 69-119, 120-166, 199-242, and 243-288; these read GKLY…DHLE, RRLY…EATT, RHLY…DHYR, and NRLY…KNDY. N-linked (GlcNAc...) asparagine glycosylation is found at Asn152 and Asn219. EGF-like domains follow at residues 363 to 397, 432 to 478, and 514 to 551; these read TQQQGQLTVCLNNGTVNHHTNTCLCQPAFGGKLCE, DRNR…ARCE, and EEYSCNNYCLNGGHCTLGNETTVPECECGEEFAGQRCE. 8 cysteine pairs are disulfide-bonded: Cys372–Cys385, Cys387–Cys396, Cys436–Cys446, Cys440–Cys465, Cys467–Cys477, Cys518–Cys528, Cys522–Cys539, and Cys541–Cys550. Asn375 carries an N-linked (GlcNAc...) asparagine glycan. Asn450 is a glycosylation site (N-linked (GlcNAc...) asparagine). Asn532 carries an N-linked (GlcNAc...) asparagine glycan. N-linked (GlcNAc...) asparagine glycosylation occurs at Asn592. A helical membrane pass occupies residues 595-615; the sequence is VVYTSLCFTVSFALLLAVVLV. Over 616-704 the chain is Cytoplasmic; that stretch reads VSRMMKPPRP…NCGDGTAERK (89 aa).

This sequence belongs to the cueball family.

It is found in the cell membrane. Its function is as follows. Has a role in spermatogenesis and oogenesis. This chain is Protein cueball, found in Anopheles gambiae (African malaria mosquito).